A 721-amino-acid polypeptide reads, in one-letter code: MSENKCPMHHSAGGTTNRDWWPKQLRLDILHQHSSLSNPMGDDFNYAEAFKSLDLAAVKQDLLALMTDSQDWWPADFGHYGPLFIRMAWHSAGTYRTGDGRGGAGSGNQRFAPLNSWPDNVSLDKARRLIWPIKQKYGNKISWADLIILTGNVALESMGFKTLGFAGGRVDIWEPEADIYWGAEDKWLDDKRYSGERDLEDPLAAVQMGLIYVNPEGPNGDPDPFAAAVDIRETFARMAMNDEETVALIAGGHTFGKTHGAGDAALVGPEPEAASIEQQGLGWKSSYKSGKGGDAISSGLEVTWTSTPTQWSNNFFENLFGYEWELTKSPAGAHQWIPKNGAGKGVIPDAHDASKRHVPAMLTTDLALIFDPDYEKISRRLFENPDEFAEIFAKAWYKLTHRDMGPCTRYLGPEVPAEEFLWQDPIPAVDHPLVDEQDVTDLKLKIIGSGLTISEVVSTAWASASTYRGSDMRGGANGARIRLAPQKDWPVNQPEQLAKVLKVLESIQSEFNKSGKKISLADLIVLAGCVGIDQAARNAGVEVTIPFTPGRMDATQAQTDVESFAVLEPVADGFRNYHPTQFSVSAEELLVDRAQLLTLTAPEMTVLIGGLRVLDTNADQSKTGVLTARPEFLTNDFFVNLLDMGTTWKPTSKAEDRFEGVDRVSGQPKWTASRVDLIFGSNSQLRALAEVYASSDAQLRFIDDFIAAWTKVMNLDRFDLR.

The segment at residues 89–212 is a cross-link (tryptophyl-tyrosyl-methioninium (Trp-Tyr) (with M-238)); that stretch reads WHSAGTYRTG…LAAVQMGLIY (124 aa). Residue H90 is the Proton acceptor of the active site. The segment at residues 212-238 is a cross-link (tryptophyl-tyrosyl-methioninium (Tyr-Met) (with W-89)); it reads YVNPEGPNGDPDPFAAAVDIRETFARM. Position 253 (H253) interacts with heme b.

Belongs to the peroxidase family. Peroxidase/catalase subfamily. Homodimer or homotetramer. The cofactor is heme b. Formation of the three residue Trp-Tyr-Met cross-link is important for the catalase, but not the peroxidase activity of the enzyme.

It catalyses the reaction H2O2 + AH2 = A + 2 H2O. The enzyme catalyses 2 H2O2 = O2 + 2 H2O. Functionally, bifunctional enzyme with both catalase and broad-spectrum peroxidase activity. The sequence is that of Catalase-peroxidase from Shewanella baltica (strain OS155 / ATCC BAA-1091).